We begin with the raw amino-acid sequence, 262 residues long: Cytochrome c oxidase subunit 3 (262 aa).

Helical transmembrane passes span 39–59 (YTMT…YQWW), 83–103 (GMIL…WAFF), 120–140 (VGIA…ILLA), 163–183 (GLFF…YEYI), 201–221 (ATGF…ICFL), and 240–260 (AWYW…IYWW).

It belongs to the cytochrome c oxidase subunit 3 family. Component of the cytochrome c oxidase (complex IV, CIV), a multisubunit enzyme composed of a catalytic core of 3 subunits and several supernumerary subunits. The complex exists as a monomer or a dimer and forms supercomplexes (SCs) in the inner mitochondrial membrane with ubiquinol-cytochrome c oxidoreductase (cytochrome b-c1 complex, complex III, CIII).

The protein localises to the mitochondrion inner membrane. The enzyme catalyses 4 Fe(II)-[cytochrome c] + O2 + 8 H(+)(in) = 4 Fe(III)-[cytochrome c] + 2 H2O + 4 H(+)(out). Its function is as follows. Component of the cytochrome c oxidase, the last enzyme in the mitochondrial electron transport chain which drives oxidative phosphorylation. The respiratory chain contains 3 multisubunit complexes succinate dehydrogenase (complex II, CII), ubiquinol-cytochrome c oxidoreductase (cytochrome b-c1 complex, complex III, CIII) and cytochrome c oxidase (complex IV, CIV), that cooperate to transfer electrons derived from NADH and succinate to molecular oxygen, creating an electrochemical gradient over the inner membrane that drives transmembrane transport and the ATP synthase. Cytochrome c oxidase is the component of the respiratory chain that catalyzes the reduction of oxygen to water. Electrons originating from reduced cytochrome c in the intermembrane space (IMS) are transferred via the dinuclear copper A center (CU(A)) of subunit 2 and heme A of subunit 1 to the active site in subunit 1, a binuclear center (BNC) formed by heme A3 and copper B (CU(B)). The BNC reduces molecular oxygen to 2 water molecules using 4 electrons from cytochrome c in the IMS and 4 protons from the mitochondrial matrix. The polypeptide is Cytochrome c oxidase subunit 3 (COIII) (Anopheles gambiae (African malaria mosquito)).